Consider the following 99-residue polypeptide: Large ribosomal subunit protein bL25 (99 aa).

It belongs to the bacterial ribosomal protein bL25 family. In terms of assembly, part of the 50S ribosomal subunit; part of the 5S rRNA/L5/L18/L25 subcomplex. Contacts the 5S rRNA. Binds to the 5S rRNA independently of L5 and L18.

Its function is as follows. This is one of the proteins that binds to the 5S RNA in the ribosome where it forms part of the central protuberance. The polypeptide is Large ribosomal subunit protein bL25 (Nostoc sp. (strain PCC 7120 / SAG 25.82 / UTEX 2576)).